A 709-amino-acid chain; its full sequence is Golgin-84 (709 aa).

Over 1–664 the chain is Cytoplasmic; the sequence is MASWLKVAED…RATRFLWRHP (664 aa). Disordered regions lie at residues 24–132, 144–195, and 211–265; these read TELS…VVDR, EVEV…NQDA, and EVIH…DQLE. Residues 29-43 are compositionally biased toward low complexity; the sequence is EQSSPQPSGSSSQEG. The segment covering 78-89 has biased composition (basic and acidic residues); that stretch reads PPRERIKIEKIR. Low complexity predominate over residues 94–113; the sequence is VDSSSVDASASKPDVSSSDV. Over residues 114 to 132 the composition is skewed to basic and acidic residues; that stretch reads KGLDDDGGAEKEEKVVVDR. Low complexity predominate over residues 162–180; the sequence is DGAADSGNSEGAAESSAPS. 2 stretches are compositionally biased toward basic and acidic residues: residues 211–222 and 248–265; these read EVIHEKNIKEVP and QQEHKLDSGSVKDQDQLE. Residues 287 to 592 are a coiled coil; the sequence is RVCAGLSSRL…AALEFQLEKS (306 aa). The chain crosses the membrane as a helical; Signal-anchor for type II membrane protein span at residues 665–684; it reads VARVSLLFYLVFVHLFLMYL. Over 685–707 the chain is Lumenal; sequence MHRLQDFASREGPTAMGGLANSD.

The protein localises to the golgi apparatus membrane. Its function is as follows. May be involved in maintaining Golgi structure and in intra-Golgi transport. In Oryza sativa subsp. japonica (Rice), this protein is Golgin-84.